We begin with the raw amino-acid sequence, 887 residues long: Multiple RNA-binding domain-containing protein 1 (887 aa).

Residues 2–94 (SRIIVKGLPV…SKIEVSMAKS (93 aa)) enclose the RRM 1 domain. Disordered regions lie at residues 121 to 143 (KLLQ…NIDD), 203 to 276 (KEEN…RNLA), and 297 to 336 (SEAE…DEEL). Residues Ser220 and Ser264 each carry the phosphoserine modification. The span at 264–276 (SDEKENEKRRNLA) shows a compositional bias: basic and acidic residues. Residues 306-315 (SSYATEQNES) are compositionally biased toward polar residues. Basic and acidic residues predominate over residues 316 to 325 (LDTKKEEQPE). RRM domains lie at 345–423 (GRLF…PGEE), 532–604 (KVIL…RGPK), 663–746 (VSIF…LSHR), and 763–840 (GKII…YAEE). The tract at residues 864–887 (EMAALRNGGGRKKLDVDDEENEGF) is disordered.

It belongs to the RRM MRD1 family. Interacts with NOP1. Binds to the 35S pre-rRNA and the U3 snoRNA.

It localises to the nucleus. Involved in pre-rRNA processing. Required for maintaining steady-state levels of 40S ribosomal subunit. Required for the initial processing of pre-rRNA at the A0 to A2 sites, leading to the processing of the 23S pre-rRNA intermediate to the 18S rRNA. This Saccharomyces cerevisiae (strain ATCC 204508 / S288c) (Baker's yeast) protein is Multiple RNA-binding domain-containing protein 1 (MRD1).